Consider the following 254-residue polypeptide: NAD kinase (254 aa).

Asp-44 (proton acceptor) is an active-site residue. Residues 44–45, 114–115, Asp-144, Ala-152, 155–160, and Ala-179 contribute to the NAD(+) site; these read DG, NE, and TAYNYS.

The protein belongs to the NAD kinase family. Requires a divalent metal cation as cofactor.

It is found in the cytoplasm. The enzyme catalyses NAD(+) + ATP = ADP + NADP(+) + H(+). Functionally, involved in the regulation of the intracellular balance of NAD and NADP, and is a key enzyme in the biosynthesis of NADP. Catalyzes specifically the phosphorylation on 2'-hydroxyl of the adenosine moiety of NAD to yield NADP. In Cereibacter sphaeroides (strain ATCC 17029 / ATH 2.4.9) (Rhodobacter sphaeroides), this protein is NAD kinase.